Here is a 545-residue protein sequence, read N- to C-terminus: Carboxypeptidase Y homolog A (545 aa).

A signal peptide spans 1–18 (MKSSLALALLVGGAIASG). A propeptide spanning residues 19 to 125 (PQQQVLREPV…RLDTYDLRVK (107 aa)) is cleaved from the precursor. Disulfide bonds link cysteine 179/cysteine 418, cysteine 313/cysteine 327, cysteine 337/cysteine 360, cysteine 344/cysteine 353, and cysteine 382/cysteine 388. Asparagine 210 carries an N-linked (GlcNAc...) asparagine glycan. The active site involves serine 266. Aspartate 457 is a catalytic residue. 2 N-linked (GlcNAc...) asparagine glycosylation sites follow: asparagine 487 and asparagine 507. Histidine 518 is an active-site residue.

The protein belongs to the peptidase S10 family.

The protein localises to the vacuole. It catalyses the reaction Release of a C-terminal amino acid with broad specificity.. Its function is as follows. Vacuolar carboxypeptidase involved in degradation of small peptides. Digests preferentially peptides containing an aliphatic or hydrophobic residue in P1' position, as well as methionine, leucine or phenylalanine in P1 position of ester substrate. In Ajellomyces capsulatus (strain NAm1 / WU24) (Darling's disease fungus), this protein is Carboxypeptidase Y homolog A (CPYA).